Here is a 170-residue protein sequence, read N- to C-terminus: MTELQSALLLRRQLAELNKNPVEGFSAGLIDDNDLYRWEVLIIGPPDTLYEGGVFKAHLTFPKDYPLRPPKMKFITEIWHPNVDKNGDVCISILHEPGEDKYGYEKPEGRWLPIHTVETIMISVISMLADPNGDSPANVDAAKEWREDRNGEFKRKVARCVRKSQETAFE.

M1 is modified (N-acetylmethionine). T2 carries the post-translational modification N-acetylthreonine; in Ubiquitin-conjugating enzyme E2 G1, N-terminally processed. Residues 5-166 (QSALLLRRQL…VARCVRKSQE (162 aa)) enclose the UBC core domain. The Glycyl thioester intermediate role is filled by C90.

Belongs to the ubiquitin-conjugating enzyme family. Post-translationally, autoubiquitinated.

It carries out the reaction S-ubiquitinyl-[E1 ubiquitin-activating enzyme]-L-cysteine + [E2 ubiquitin-conjugating enzyme]-L-cysteine = [E1 ubiquitin-activating enzyme]-L-cysteine + S-ubiquitinyl-[E2 ubiquitin-conjugating enzyme]-L-cysteine.. Its pathway is protein modification; protein ubiquitination. Its function is as follows. Accepts ubiquitin from the E1 complex and catalyzes its covalent attachment to other proteins. In vitro catalyzes 'Lys-48'-, as well as 'Lys-63'-linked polyubiquitination. May be involved in degradation of muscle-specific proteins. Mediates polyubiquitination of CYP3A4. The sequence is that of Ubiquitin-conjugating enzyme E2 G1 (UBE2G1) from Macaca fascicularis (Crab-eating macaque).